Here is a 124-residue protein sequence, read N- to C-terminus: Fluoride-specific ion channel FluC (124 aa).

The next 4 membrane-spanning stretches (helical) occupy residues Phe5–Leu25, Leu35–Leu55, Leu63–Leu83, and Leu98–Val118. Residues Gly73 and Thr76 each contribute to the Na(+) site.

The protein belongs to the fluoride channel Fluc/FEX (TC 1.A.43) family.

The protein localises to the cell inner membrane. The enzyme catalyses fluoride(in) = fluoride(out). Na(+) is not transported, but it plays an essential structural role and its presence is essential for fluoride channel function. Its function is as follows. Fluoride-specific ion channel. Important for reducing fluoride concentration in the cell, thus reducing its toxicity. This Paracoccus denitrificans (strain Pd 1222) protein is Fluoride-specific ion channel FluC.